The following is a 299-amino-acid chain: UPF0282 protein TK1681 (299 aa).

The protein belongs to the UPF0282 family.

The polypeptide is UPF0282 protein TK1681 (Thermococcus kodakarensis (strain ATCC BAA-918 / JCM 12380 / KOD1) (Pyrococcus kodakaraensis (strain KOD1))).